The chain runs to 212 residues: uncharacterized protein (212 aa).

Residues glycine 53, glutamate 74, and aspartate 97 each coordinate S-adenosyl-L-methionine.

This sequence belongs to the methyltransferase superfamily. YrrT family.

In terms of biological role, could be a S-adenosyl-L-methionine-dependent methyltransferase. This is an uncharacterized protein from Bacillus cereus (strain ZK / E33L).